The following is a 445-amino-acid chain: FAS-associated factor 2-A (445 aa).

Residues 12–53 (EQTEKLLQFQDLTGIESMDQCRQTLQQHNWNIEAAVQDRLNE) form the UBA domain. Positions 275–353 (SERLEREERN…ERKSECLPAE (79 aa)) form a coiled coil. The interval 302 to 354 (RADQEKERKKKEKQEQKRREEEEAQRKQMLEERKKRNLEEEKERKSECLPAEP) is disordered. Residues 303–348 (ADQEKERKKKEKQEQKRREEEEAQRKQMLEERKKRNLEEEKERKSE) are compositionally biased toward basic and acidic residues. The region spanning 357-439 (DHPDNVKIIF…GLSQSQLLFV (83 aa)) is the UBX domain.

It localises to the cytoplasm. The protein resides in the lipid droplet. The protein localises to the endoplasmic reticulum. Functionally, plays an important role in endoplasmic reticulum-associated degradation (ERAD) that mediates ubiquitin-dependent degradation of misfolded endoplasmic reticulum proteins. Involved in inhibition of lipid droplet degradation. Involved in stress granule disassembly. This Xenopus laevis (African clawed frog) protein is FAS-associated factor 2-A (faf2-a).